Here is a 64-residue protein sequence, read N- to C-terminus: Large ribosomal subunit protein bL35 (64 aa).

Residues 20 to 42 (GRVKREKMYGSHNLEKKNRKRTR) form a disordered region. Over residues 25-35 (EKMYGSHNLEK) the composition is skewed to basic and acidic residues.

It belongs to the bacterial ribosomal protein bL35 family.

The protein is Large ribosomal subunit protein bL35 of Chlorobium phaeobacteroides (strain BS1).